A 96-amino-acid chain; its full sequence is Maintenance of carboxysome distribution protein B (96 aa).

Residues 1-18 (MTNLEDKLSASIKTENKD) are compositionally biased toward basic and acidic residues. Residues 1-96 (MTNLEDKLSA…STHPRRVWPD (96 aa)) form a disordered region. Over residues 59–74 (ARATTTKPAVSKSSKP) the composition is skewed to low complexity.

In terms of assembly, monomer, associates with McdA:DNA. Interacts with shell components of the carboxysome.

The protein resides in the carboxysome. McdA and McdB together mediate carboxysome positioning on the nucleoid and to prevent their aggregation in the cell. Undergoes liquid-liquid phase separation at pH 7.0 in the presence of crowders polyethylene glycol or Ficoll. McdA is an ATPase that forms dynamic gradients on the nucleoid in response to adapter protein McdB, which associates with carboxysomes. The interplay between McdA gradients on the nucleoid and McdB-bound carboxysomes result in the equal spacing of Cbs along the cell length. Stimulates the ATPase activity of McdA, causing McdA to be released from DNA. Functionally, incorrect positioning (aggregation) of carboxysomes results in reduced CO(2) fixation by encapsulated form 1 ribulose-1,5-bisphosphate carboxylase (RuBisCO, cbbL/cbbS), which leads to slower growth. In Halothiobacillus neapolitanus (strain ATCC 23641 / c2) (Thiobacillus neapolitanus), this protein is Maintenance of carboxysome distribution protein B.